The sequence spans 251 residues: Ubiquinone/menaquinone biosynthesis C-methyltransferase UbiE (251 aa).

Residues threonine 74, aspartate 95, and 123–124 (DA) contribute to the S-adenosyl-L-methionine site.

It belongs to the class I-like SAM-binding methyltransferase superfamily. MenG/UbiE family.

It catalyses the reaction a 2-demethylmenaquinol + S-adenosyl-L-methionine = a menaquinol + S-adenosyl-L-homocysteine + H(+). The catalysed reaction is a 2-methoxy-6-(all-trans-polyprenyl)benzene-1,4-diol + S-adenosyl-L-methionine = a 5-methoxy-2-methyl-3-(all-trans-polyprenyl)benzene-1,4-diol + S-adenosyl-L-homocysteine + H(+). The protein operates within quinol/quinone metabolism; menaquinone biosynthesis; menaquinol from 1,4-dihydroxy-2-naphthoate: step 2/2. It functions in the pathway cofactor biosynthesis; ubiquinone biosynthesis. In terms of biological role, methyltransferase required for the conversion of demethylmenaquinol (DMKH2) to menaquinol (MKH2) and the conversion of 2-polyprenyl-6-methoxy-1,4-benzoquinol (DDMQH2) to 2-polyprenyl-3-methyl-6-methoxy-1,4-benzoquinol (DMQH2). The chain is Ubiquinone/menaquinone biosynthesis C-methyltransferase UbiE from Idiomarina loihiensis (strain ATCC BAA-735 / DSM 15497 / L2-TR).